A 39-amino-acid chain; its full sequence is Cytochrome b6-f complex subunit 5 (39 aa).

A helical membrane pass occupies residues 5-25; sequence LLCGIVLGLVPITLLGLFVAA.

This sequence belongs to the PetG family. In terms of assembly, the 4 large subunits of the cytochrome b6-f complex are cytochrome b6, subunit IV (17 kDa polypeptide, PetD), cytochrome f and the Rieske protein, while the 4 small subunits are PetG, PetL, PetM and PetN. The complex functions as a dimer.

It localises to the cellular thylakoid membrane. In terms of biological role, component of the cytochrome b6-f complex, which mediates electron transfer between photosystem II (PSII) and photosystem I (PSI), cyclic electron flow around PSI, and state transitions. PetG is required for either the stability or assembly of the cytochrome b6-f complex. The chain is Cytochrome b6-f complex subunit 5 from Prochlorococcus marinus (strain SARG / CCMP1375 / SS120).